The primary structure comprises 443 residues: MSIESIKAREILDSRGNPTLEVEVWTSEGMFSAKVPSGASTGIHEAFELRDGDKSRYFGYGVLNAIVNVNNLISPTLKGMRVDNQKAIDDKMIELDGTKNKSKLGSNAIVGVSMAVARAAASIKGVPLYRYISQLAGNSNIRLPVPCFNVINGGKHAGNRLPFQEFMLVPIGAPKFKEALRYGSEVYHSLKEIIKERYGLDATNVGDEGGFAPNLTSPEEALTLLVDAINHSGYQDVIKIGIDSAASEFWNPKTSKYDMDFKNIGSSHLKSSLNSGEQLMSRYLEILKKYPIAFFEDPFGEDDWENHGKITAAIGNKIQIIGDDLLCTNPERIKKAISEKTVNSLLLKINQIGTLTETIEAAKLAKEAGWGCLVSHRSGETDDHFIADLVVGLGTGEIKSGAPCRFERLSKYNRLMKIEEELEKLHRSNGNSFEYAGEEFYHF.

The substrate site is built by histidine 156 and glutamate 165. The active-site Proton donor is the glutamate 208. Positions 243, 296, and 323 each coordinate Mg(2+). Residues glutamate 296 and aspartate 323 each coordinate substrate. Catalysis depends on lysine 348, which acts as the Proton acceptor. Substrate is bound by residues serine 375–serine 378 and lysine 399.

This sequence belongs to the enolase family. Homodimer. Mg(2+) is required as a cofactor.

It localises to the cytoplasm. It carries out the reaction (2R)-2-phosphoglycerate = phosphoenolpyruvate + H2O. The protein operates within carbohydrate degradation; glycolysis; pyruvate from D-glyceraldehyde 3-phosphate: step 4/5. In Dictyostelium discoideum (Social amoeba), this protein is Enolase B (enoB).